Reading from the N-terminus, the 377-residue chain is Nitric oxide reductase FlRd-NAD(+) reductase (377 aa).

The protein belongs to the FAD-dependent oxidoreductase family. FAD serves as cofactor.

It localises to the cytoplasm. It catalyses the reaction 2 reduced [nitric oxide reductase rubredoxin domain] + NAD(+) + H(+) = 2 oxidized [nitric oxide reductase rubredoxin domain] + NADH. It functions in the pathway nitrogen metabolism; nitric oxide reduction. In terms of biological role, one of at least two accessory proteins for anaerobic nitric oxide (NO) reductase. Reduces the rubredoxin moiety of NO reductase. The chain is Nitric oxide reductase FlRd-NAD(+) reductase from Salmonella typhimurium (strain LT2 / SGSC1412 / ATCC 700720).